The sequence spans 241 residues: MSNKNVNVRKSQEITFCLLAGILMFMAMMVAGRAEAGVALGATRVIYPAGQKQEQLAVTNNDENSTYLIQSWVENADGVKDGRFIVTPPLFAMKGKKENTLRILDATNNQLPQDRESLFWMNVKAIPSMDKSKLTENTLQLAIISRIKLYYRPAKLALPPDQAAEKLRFRRSANSLTLINPTPYYLTVTELNAGTRVLENALVPPMGESTVKLPSDAGSNITYRTINDYGALTPKMTGVME.

Residues 1–36 (MSNKNVNVRKSQEITFCLLAGILMFMAMMVAGRAEA) form the signal peptide.

It belongs to the periplasmic pilus chaperone family.

The protein resides in the periplasm. Functionally, required for the biogenesis of type 1 fimbriae. Binds and interact with FimH. The chain is Chaperone protein FimC (fimC) from Escherichia coli (strain K12).